The following is a 70-amino-acid chain: Conotoxin Lt11.6 (70 aa).

Positions 1-26 (MMFRLTSVGSFLLVIVFLNLVVLTNA) are cleaved as a signal peptide. 4 disulfide bridges follow: cysteine 27-cysteine 41, cysteine 34-cysteine 46, cysteine 40-cysteine 50, and cysteine 45-cysteine 54. The propeptide occupies 58–70 (AQRQKLLRSFGQR).

The protein belongs to the conotoxin I2 superfamily. As to expression, expressed by the venom duct.

The protein resides in the secreted. The sequence is that of Conotoxin Lt11.6 from Conus litteratus (Lettered cone).